The sequence spans 82 residues: Sec-independent protein translocase protein TatA (82 aa).

The helical transmembrane segment at 1 to 21 threads the bilayer; the sequence is MGSLSIWHWLIVGAVVLLVFG. The disordered stretch occupies residues 43 to 82; the sequence is GLSEDEEKAEAKPVGEPSLRSLDHQGAGDPLKTPDARKIG.

The protein belongs to the TatA/E family. As to quaternary structure, the Tat system comprises two distinct complexes: a TatABC complex, containing multiple copies of TatA, TatB and TatC subunits, and a separate TatA complex, containing only TatA subunits. Substrates initially bind to the TatABC complex, which probably triggers association of the separate TatA complex to form the active translocon.

The protein resides in the cell inner membrane. Part of the twin-arginine translocation (Tat) system that transports large folded proteins containing a characteristic twin-arginine motif in their signal peptide across membranes. TatA could form the protein-conducting channel of the Tat system. This Methylocella silvestris (strain DSM 15510 / CIP 108128 / LMG 27833 / NCIMB 13906 / BL2) protein is Sec-independent protein translocase protein TatA.